The primary structure comprises 549 residues: Glucose-6-phosphate isomerase (549 aa).

The active-site Proton donor is glutamate 355. Catalysis depends on residues histidine 386 and lysine 514.

The protein belongs to the GPI family.

It is found in the cytoplasm. The catalysed reaction is alpha-D-glucose 6-phosphate = beta-D-fructose 6-phosphate. It participates in carbohydrate biosynthesis; gluconeogenesis. Its pathway is carbohydrate degradation; glycolysis; D-glyceraldehyde 3-phosphate and glycerone phosphate from D-glucose: step 2/4. Catalyzes the reversible isomerization of glucose-6-phosphate to fructose-6-phosphate. In Enterobacter sp. (strain 638), this protein is Glucose-6-phosphate isomerase.